A 295-amino-acid polypeptide reads, in one-letter code: Nuclear transcription factor Y subunit A-2 (295 aa).

Residues 139 to 165 (YVNSKQYHGIIRRRQSRAKAAAVLDQK) carry the Subunit association domain (SAD) motif. The segment at residues 173–198 (KPYMHHSRHLHALRRPRGSGGRFLNT) is a DNA-binding region (NFYA/HAP2-type). Residues 178–189 (HSRHLHALRRPR) show a composition bias toward basic residues. Positions 178-244 (HSRHLHALRR…VVHPENGTMN (67 aa)) are disordered. Polar residues predominate over residues 197–209 (NTKSQNLENSGTN). Over residues 216 to 233 (SMQIQSQPKPQQSNSQNS) the composition is skewed to low complexity.

The protein belongs to the NFYA/HAP2 subunit family. Heterotrimeric transcription factor composed of three components, NF-YA, NF-YB and NF-YC. NF-YB and NF-YC must interact and dimerize for NF-YA association and DNA binding. Component of a heat stress-inducible transcriptional complex with NF-YA and NF-YB subunits made, at least, of NFYA2, NFYB3 and DPB3-1 in cooperation with DREB2A. In terms of tissue distribution, ubiquitous. Expressed in seedlings, roots, petioles, hypocotyls, reproductive organ tissues and leaves.

It is found in the nucleus. Functionally, stimulates the transcription of various genes by recognizing and binding to a CCAAT motif in promoters. Promotes the expression of heat stress-inducible genes by contributing to the formation of a heat stress-specific transcriptional complex with NF-Y subunits (e.g. DPB3-1, NF-YA2 and NF-YB3) and DREB2A at the promoter of target genes, thus promoting heat tolerance. The sequence is that of Nuclear transcription factor Y subunit A-2 from Arabidopsis thaliana (Mouse-ear cress).